The sequence spans 133 residues: ATP synthase epsilon chain, chloroplastic (133 aa).

Belongs to the ATPase epsilon chain family. In terms of assembly, F-type ATPases have 2 components, CF(1) - the catalytic core - and CF(0) - the membrane proton channel. CF(1) has five subunits: alpha(3), beta(3), gamma(1), delta(1), epsilon(1). CF(0) has three main subunits: a, b and c.

It localises to the plastid. It is found in the chloroplast thylakoid membrane. Its function is as follows. Produces ATP from ADP in the presence of a proton gradient across the membrane. The sequence is that of ATP synthase epsilon chain, chloroplastic from Solanum lycopersicum (Tomato).